A 559-amino-acid chain; its full sequence is Tissue-type plasminogen activator (559 aa).

The N-terminal stretch at 1 to 17 (MKRELLCVLLLCGLAFP) is a signal peptide. The propeptide occupies 18–29 (LPDQGIHGRFRR). Residues 30–32 (GAR) constitute a propeptide, removed by plasmin. A Fibronectin type-I domain is found at 36–78 (ATCRDEPTQTTYQQHQSWLRPMLRSSRVEYCRCNSGLVQCHSV). 17 cysteine pairs are disulfide-bonded: C38/C68, C66/C75, C83/C94, C88/C105, C107/C116, C124/C205, C145/C187, C176/C200, C213/C294, C234/C276, C265/C289, C297/C428, C340/C356, C348/C417, C442/C516, C474/C490, and C506/C534. Residues 39 to 49 (RDEPTQTTYQQ) are important for binding to annexin A2. The EGF-like domain occupies 79–117 (PVRSCSEPRCFNGGTCQQALYFSDFVCQCPDGFVGKRCD). Kringle domains follow at residues 124–205 (CFEE…TPAC) and 213–294 (CYVG…MSPC). The N-linked (GlcNAc...) asparagine glycan is linked to N149. The Peptidase S1 domain maps to 309-558 (IKGGLYTDIT…YLDWIHDNMK (250 aa)). Residues H355 and D404 each act as charge relay system in the active site. N481 carries an N-linked (GlcNAc...) asparagine glycan. S510 acts as the Charge relay system in catalysis.

Belongs to the peptidase S1 family. As to quaternary structure, heterodimer of chain A and chain B held by a disulfide bond. Binds to fibrin with high affinity. This interaction leads to an increase in the catalytic efficiency of the enzyme due to an increase in affinity for plasminogen. Similarly, binding to heparin increases the activation of plasminogen. Binds to annexin A2, cytokeratin-8, fibronectin and laminin. Binds to mannose receptor and the low-density lipoprotein receptor-related protein (LRP1); these proteins are involved in TPA clearance. Binds LRP1B; binding is followed by internalization and degradation. Forms heterodimer with SERPINA5. Interacts with SERPINE1. In complex with SERPINE1, interacts with SORL1. Post-translationally, the single chain, almost fully active enzyme, can be further processed into a two-chain fully active form by a cleavage after Arg-308 catalyzed by plasmin, tissue kallikrein or factor Xa.

The protein localises to the secreted. The protein resides in the extracellular space. It carries out the reaction Specific cleavage of Arg-|-Val bond in plasminogen to form plasmin.. With respect to regulation, inhibited by SERPINA5. Inhibited by SERPINE1. In terms of biological role, converts the abundant, but inactive, zymogen plasminogen to plasmin by hydrolyzing a single Arg-Val bond in plasminogen. By controlling plasmin-mediated proteolysis, it plays an important role in tissue remodeling and degradation, in cell migration and many other physiopathological events. During oocyte activation, plays a role in cortical granule reaction in the zona reaction, which contributes to the block to polyspermy. In Mus musculus (Mouse), this protein is Tissue-type plasminogen activator (Plat).